A 328-amino-acid chain; its full sequence is DNA-directed RNA polymerase subunit alpha (328 aa).

The tract at residues 1–244 is alpha N-terminal domain (alpha-NTD); that stretch reads MEKFLKYEIK…EHLNPIVSVN (244 aa). The tract at residues 261–328 is alpha C-terminal domain (alpha-CTD); it reads KVKSFAKQIE…VQELGLKFRS (68 aa).

Belongs to the RNA polymerase alpha chain family. In terms of assembly, homodimer. The RNAP catalytic core consists of 2 alpha, 1 beta, 1 beta' and 1 omega subunit. When a sigma factor is associated with the core the holoenzyme is formed, which can initiate transcription.

The catalysed reaction is RNA(n) + a ribonucleoside 5'-triphosphate = RNA(n+1) + diphosphate. In terms of biological role, DNA-dependent RNA polymerase catalyzes the transcription of DNA into RNA using the four ribonucleoside triphosphates as substrates. In Mycoplasma genitalium (strain ATCC 33530 / DSM 19775 / NCTC 10195 / G37) (Mycoplasmoides genitalium), this protein is DNA-directed RNA polymerase subunit alpha.